The following is a 593-amino-acid chain: Aspartate--tRNA(Asp/Asn) ligase (593 aa).

Glutamate 172 provides a ligand contact to L-aspartate. Residues 196–199 are aspartate; it reads QLFK. Arginine 218 contacts L-aspartate. Residues 218–220 and glutamine 227 each bind ATP; that span reads RDE. Position 450 (histidine 450) interacts with L-aspartate. Glutamate 484 is a binding site for ATP. Arginine 491 lines the L-aspartate pocket. Residue 536 to 539 coordinates ATP; that stretch reads GLDR.

Belongs to the class-II aminoacyl-tRNA synthetase family. Type 1 subfamily. As to quaternary structure, homodimer.

It is found in the cytoplasm. It catalyses the reaction tRNA(Asx) + L-aspartate + ATP = L-aspartyl-tRNA(Asx) + AMP + diphosphate. Its function is as follows. Aspartyl-tRNA synthetase with relaxed tRNA specificity since it is able to aspartylate not only its cognate tRNA(Asp) but also tRNA(Asn). Reaction proceeds in two steps: L-aspartate is first activated by ATP to form Asp-AMP and then transferred to the acceptor end of tRNA(Asp/Asn). The protein is Aspartate--tRNA(Asp/Asn) ligase of Nitrosomonas europaea (strain ATCC 19718 / CIP 103999 / KCTC 2705 / NBRC 14298).